The sequence spans 504 residues: 2-isopropylmalate synthase (504 aa).

The 262-residue stretch at 6-267 folds into the Pyruvate carboxyltransferase domain; that stretch reads IIIFDTTLRD…YTGIISKEIY (262 aa). Mn(2+)-binding residues include Asp-15, His-201, His-203, and Asn-237. The segment at 391-504 is regulatory domain; that stretch reads EITDLLQSSG…LNSYLRIHKN (114 aa).

It belongs to the alpha-IPM synthase/homocitrate synthase family. LeuA type 1 subfamily. In terms of assembly, homodimer. Mn(2+) is required as a cofactor.

It localises to the cytoplasm. The catalysed reaction is 3-methyl-2-oxobutanoate + acetyl-CoA + H2O = (2S)-2-isopropylmalate + CoA + H(+). The protein operates within amino-acid biosynthesis; L-leucine biosynthesis; L-leucine from 3-methyl-2-oxobutanoate: step 1/4. Catalyzes the condensation of the acetyl group of acetyl-CoA with 3-methyl-2-oxobutanoate (2-ketoisovalerate) to form 3-carboxy-3-hydroxy-4-methylpentanoate (2-isopropylmalate). In Campylobacter concisus (strain 13826), this protein is 2-isopropylmalate synthase.